Consider the following 78-residue polypeptide: Large ribosomal subunit protein bL28 (78 aa).

Positions 1-20 (MSRVCQVTSKRPAVGNNRSH) are disordered.

This sequence belongs to the bacterial ribosomal protein bL28 family.

The protein is Large ribosomal subunit protein bL28 of Haemophilus ducreyi (strain 35000HP / ATCC 700724).